The primary structure comprises 407 residues: MKKDVKKVVLAYSGGLDTSIILKWLQDEYKCEVVTFTADIGQGEELEPARKKALALGVKPENIFIEDLREEFVRDYVFPMFRANAIYEGEYLLGTSIARPLIAKRQSEIARLVGADGVSHGATGKGNDQVRFELGYYALGDNLTIIAPWREWDLNSREKLLAYAEKNGIDITKKPGKSPYSMDANLLHISYEGLVLEDPSHAPEDDMWRWTVSPKDAPDKSEIIEIGYEKGDPVSIDGKKMSPAEILTELNRLGAKHGIGRLDIVENRSVGMKSRGCYETPGGTIMLKAHRAIESITLDRGAAHLKDEIMPKYAELVYNGYWWSPERNMLQALIDKSQEHVNGSVKVELYKGNVTILGRSSKDDNLFSEAYCTFEEDSVYDQKDAEGFIKLNALRFIIARKNGRKFD.

ATP contacts are provided by residues Ala11–Ser19 and Ala38. L-citrulline contacts are provided by Tyr91 and Ser96. Gly121 contacts ATP. Positions 123, 127, and 128 each coordinate L-aspartate. Asn127 serves as a coordination point for L-citrulline. L-citrulline is bound by residues Arg131, Ser181, Ser190, Glu266, and Tyr278.

It belongs to the argininosuccinate synthase family. Type 1 subfamily. As to quaternary structure, homotetramer.

It is found in the cytoplasm. The enzyme catalyses L-citrulline + L-aspartate + ATP = 2-(N(omega)-L-arginino)succinate + AMP + diphosphate + H(+). It functions in the pathway amino-acid biosynthesis; L-arginine biosynthesis; L-arginine from L-ornithine and carbamoyl phosphate: step 2/3. The polypeptide is Argininosuccinate synthase (Campylobacter concisus (strain 13826)).